The primary structure comprises 276 residues: uncharacterized protein (276 aa).

One can recognise an AB hydrolase-1 domain in the interval 20 to 137 (PVLIFIPGAN…PPINTFLPDS (118 aa)). The interval 57-76 (GESELTEPLPDSASNPDSDY) is disordered.

This sequence belongs to the AB hydrolase superfamily.

This is an uncharacterized protein from Staphylococcus aureus (strain USA300).